A 251-amino-acid polypeptide reads, in one-letter code: MELFAVPGLPEIRDGDDLAAMIDERVDLREGDVVVVASTVVSKAEGRTFDLSDFPASERAEAVADRLAEIAGEEKDPRFAQAVIEESTELIMEAPFLLTATRFGHIGVNAGIDQSNVPDGDLLLLPERPSESAARIREGIAADRVVVSDTCGRPFRHGQRGVAIGWAGLPASRDWRGERDRDGREMGVTVQNVIDELASAANLVAGEGDGGTPVVVVRDWEFGDHDGSDNHFREVEGDFVRQALRQWTFDD.

GTP-binding positions include 9 to 12 (LPEI), 38 to 39 (ST), and lysine 43. Aspartate 113 serves as a coordination point for a divalent metal cation. A GTP-binding site is contributed by asparagine 116. A divalent metal cation is bound by residues aspartate 149, threonine 150, and glutamate 207. 205-212 (AGEGDGGT) serves as a coordination point for GTP.

It belongs to the CofE family. As to quaternary structure, homodimer. Requires Mg(2+) as cofactor. It depends on Mn(2+) as a cofactor. K(+) is required as a cofactor.

The enzyme catalyses oxidized coenzyme F420-0 + GTP + L-glutamate = oxidized coenzyme F420-1 + GDP + phosphate + H(+). It catalyses the reaction oxidized coenzyme F420-1 + GTP + L-glutamate = oxidized coenzyme F420-2 + GDP + phosphate + H(+). Its pathway is cofactor biosynthesis; coenzyme F420 biosynthesis. Its function is as follows. Catalyzes the GTP-dependent successive addition of two or more gamma-linked L-glutamates to the L-lactyl phosphodiester of 7,8-didemethyl-8-hydroxy-5-deazariboflavin (F420-0) to form coenzyme F420-0-glutamyl-glutamate (F420-2) or polyglutamated F420 derivatives. This chain is Coenzyme F420:L-glutamate ligase, found in Halorubrum lacusprofundi (strain ATCC 49239 / DSM 5036 / JCM 8891 / ACAM 34).